We begin with the raw amino-acid sequence, 330 residues long: Complement factor H-related protein 3 (330 aa).

Positions 1-18 are cleaved as a signal peptide; that stretch reads MLLLINVILTLWVSCANG. 5 consecutive Sushi domains span residues 22–84, 85–142, 144–205, 208–266, and 267–330; these read PCDF…VPCL, RKCY…RCIR, RTCS…ICIN, EKCG…RCIH, and PCII…PRCE. 6 cysteine pairs are disulfide-bonded: cysteine 23–cysteine 72, cysteine 55–cysteine 83, cysteine 87–cysteine 129, cysteine 114–cysteine 140, cysteine 146–cysteine 192, and cysteine 175–cysteine 203. Asparagine 108 carries N-linked (GlcNAc...) asparagine glycosylation. N-linked (GlcNAc...) asparagine glycans are attached at residues asparagine 185 and asparagine 205. Disulfide bonds link cysteine 210-cysteine 253, cysteine 239-cysteine 264, cysteine 268-cysteine 319, and cysteine 302-cysteine 329. A glycan (N-linked (GlcNAc...) asparagine) is linked at asparagine 309.

In terms of tissue distribution, expressed by the liver and secreted in plasma.

The protein localises to the secreted. In terms of biological role, might be involved in complement regulation. This chain is Complement factor H-related protein 3 (CFHR3), found in Homo sapiens (Human).